The sequence spans 246 residues: ATP synthase subunit a (246 aa).

The propeptide at 1–3 (MFY) is removed in mature form. 7 helical membrane passes run 20–40 (ILTL…SIIF), 56–76 (WGVA…SQIG), 82–102 (FFPL…ISMI), 112–132 (LVAI…LGLY), 138–158 (FFAL…LVLI), 176–196 (ANIL…VNLM), and 203–223 (FIGG…EVGI).

This sequence belongs to the ATPase A chain family. In terms of assembly, F-type ATPases have 2 components, CF(1) - the catalytic core - and CF(0) - the membrane proton channel. CF(1) has five subunits: alpha(3), beta(3), gamma(1), delta(1), epsilon(1). CF(0) has three main subunits: a, b and c.

It localises to the mitochondrion inner membrane. In terms of biological role, mitochondrial membrane ATP synthase (F(1)F(0) ATP synthase or Complex V) produces ATP from ADP in the presence of a proton gradient across the membrane which is generated by electron transport complexes of the respiratory chain. F-type ATPases consist of two structural domains, F(1) - containing the extramembraneous catalytic core and F(0) - containing the membrane proton channel, linked together by a central stalk and a peripheral stalk. During catalysis, ATP synthesis in the catalytic domain of F(1) is coupled via a rotary mechanism of the central stalk subunits to proton translocation. Key component of the proton channel; it may play a direct role in the translocation of protons across the membrane. This Candida albicans (strain SC5314 / ATCC MYA-2876) (Yeast) protein is ATP synthase subunit a (ATP6).